We begin with the raw amino-acid sequence, 317 residues long: Homoserine kinase (317 aa).

95-105 (PHSRGLGSSAA) provides a ligand contact to ATP.

Belongs to the GHMP kinase family. Homoserine kinase subfamily.

It is found in the cytoplasm. The enzyme catalyses L-homoserine + ATP = O-phospho-L-homoserine + ADP + H(+). Its pathway is amino-acid biosynthesis; L-threonine biosynthesis; L-threonine from L-aspartate: step 4/5. Catalyzes the ATP-dependent phosphorylation of L-homoserine to L-homoserine phosphate. The sequence is that of Homoserine kinase from Mycolicibacterium smegmatis (strain ATCC 700084 / mc(2)155) (Mycobacterium smegmatis).